The chain runs to 322 residues: Aspartate carbamoyltransferase catalytic subunit (322 aa).

Carbamoyl phosphate is bound by residues Arg65 and Thr66. Lys93 contacts L-aspartate. Carbamoyl phosphate contacts are provided by Arg115, His143, and Gln146. 2 residues coordinate L-aspartate: Arg176 and Arg230. Positions 271 and 272 each coordinate carbamoyl phosphate.

The protein belongs to the aspartate/ornithine carbamoyltransferase superfamily. ATCase family. In terms of assembly, heterododecamer (2C3:3R2) of six catalytic PyrB chains organized as two trimers (C3), and six regulatory PyrI chains organized as three dimers (R2).

It carries out the reaction carbamoyl phosphate + L-aspartate = N-carbamoyl-L-aspartate + phosphate + H(+). It functions in the pathway pyrimidine metabolism; UMP biosynthesis via de novo pathway; (S)-dihydroorotate from bicarbonate: step 2/3. Its function is as follows. Catalyzes the condensation of carbamoyl phosphate and aspartate to form carbamoyl aspartate and inorganic phosphate, the committed step in the de novo pyrimidine nucleotide biosynthesis pathway. In Brucella canis (strain ATCC 23365 / NCTC 10854 / RM-666), this protein is Aspartate carbamoyltransferase catalytic subunit.